Reading from the N-terminus, the 231-residue chain is NKG2-C type II integral membrane protein (231 aa).

Positions 1 to 12 (MNKQRGTFSEVS) are enriched in polar residues. The interval 1–31 (MNKQRGTFSEVSLAQDPKRQQRKPKDNKSSI) is disordered. The Cytoplasmic segment spans residues 1–70 (MNKQRGTFSE…CQGLLPPPEK (70 aa)). Over residues 16–28 (DPKRQQRKPKDNK) the composition is skewed to basic and acidic residues. A helical; Signal-anchor for type II membrane protein transmembrane segment spans residues 71-93 (LTAEVLGIICIVLMATVLKTVVL). Topologically, residues 94–231 (IPFLEQNNSF…SKRYYCKHKL (138 aa)) are extracellular. An N-linked (GlcNAc...) asparagine glycan is attached at asparagine 100. Positions 116-229 (HCPEEWITYS…GSSKRYYCKH (114 aa)) constitute a C-type lectin domain. Intrachain disulfides connect cysteine 117-cysteine 128, cysteine 145-cysteine 227, and cysteine 206-cysteine 219. Asparagine 149 carries N-linked (GlcNAc...) asparagine glycosylation.

Heterodimer with KLRD1; disulfide-linked. KLRD1-KLRC2 receptor complex interacts with TYROBP/DAP12 homodimer; this interaction is necessary for the expression on the cell surface. In terms of tissue distribution, natural killer cells.

Its subcellular location is the cell membrane. Its function is as follows. Immune activating receptor involved in self-nonself discrimination. In complex with KLRD1 on cytotoxic lymphocyte subsets, recognizes non-classical major histocompatibility MHC-E loaded with signal sequence-derived peptides from non-classical MHC-G molecules, likely playing a role in the generation and effector functions of adaptive natural killer (NK) cells and in maternal-fetal tolerance during pregnancy. Regulates the effector functions of terminally differentiated cytotoxic lymphocyte subsets, and in particular may play a role in adaptive NK cell response to viral infection. Upon MHC-E-peptide binding, transmits intracellular signals via the adapter protein TYROBP/DAP12, triggering the phosphorylation of proximal signaling molecules and cell activation. The polypeptide is NKG2-C type II integral membrane protein (KLRC2) (Macaca mulatta (Rhesus macaque)).